Here is a 409-residue protein sequence, read N- to C-terminus: Ubiquitin-associated domain-containing protein 1 (409 aa).

M1 carries the N-acetylmethionine modification. Residues 14-98 (LRLHICAADG…LLLIKKRAPS (85 aa)) enclose the Ubiquitin-like domain. One can recognise a UBA 1 domain in the interval 187 to 231 (DEDERVDETALRQLTEMGFPESRASKALRLNHMSVPQAMEWLIEH). Residues 235-273 (PAIDTPLPGHAAQAEASAAAATSSSSSEAAVGTSVEDEE) are disordered. Residues 245–264 (AAQAEASAAAATSSSSSEAA) are compositionally biased toward low complexity. One can recognise a UBA 2 domain in the interval 292–332 (RADARAVISLMEMGFDEKEVIDALRVNNNQQNAACEWLLGD). The STI1 domain maps to 357-396 (NPVVQLGLTNPKTLLAFEDMLENPLNSTQWMNDPETGPVM).

As to quaternary structure, component of the KPC complex composed of RNF123/KPC1 and UBAC1/KPC2. Interacts (via ubiquitin-like domain) with RNF123. Interacts (via ubiquitin-like and UBA domains) with the proteasome via its N-terminal domain.

Its subcellular location is the cytoplasm. Its pathway is protein modification; protein ubiquitination. Non-catalytic component of the KPC complex, a E3 ubiquitin-protein ligase complex that mediates polyubiquitination of target proteins, such as CDKN1B and NFKB1. The KPC complex catalyzes polyubiquitination and proteasome-mediated degradation of CDKN1B during G1 phase of the cell cycle. The KPC complex also acts as a key regulator of the NF-kappa-B signaling by promoting maturation of the NFKB1 component of NF-kappa-B by catalyzing ubiquitination of the NFKB1 p105 precursor. Within the KPC complex, UBAC1 acts as an adapter that promotes the transfer of target proteins that have been polyubiquitinated by RNF123/KPC1 to the 26S proteasome. In Rattus norvegicus (Rat), this protein is Ubiquitin-associated domain-containing protein 1 (Ubac1).